The chain runs to 992 residues: Aminopeptidase Q (992 aa).

The Cytoplasmic portion of the chain corresponds to 2-13; the sequence is GPPSSSGFYVSR. A helical; Signal-anchor for type II membrane protein transmembrane segment spans residues 14–34; that stretch reads AVALLLAALAAALLLALAVLA. Residues 35–992 are Extracellular-facing; that stretch reads ALYGRCARVQ…RMTAWLRKNT (958 aa). The tract at residues 48–92 is disordered; sequence LHHGGVPDAASSPRGTQEEQLPTWPPRPTREPAGTATPGHWRPPG. Asparagine 133 is a glycosylation site (N-linked (GlcNAc...) asparagine). Glutamate 241 lines the substrate pocket. Residues asparagine 262, asparagine 289, asparagine 347, and asparagine 361 are each glycosylated (N-linked (GlcNAc...) asparagine). Position 380–384 (380–384) interacts with substrate; sequence SAMEN. Histidine 416 provides a ligand contact to Zn(2+). Glutamate 417 functions as the Proton acceptor in the catalytic mechanism. 2 residues coordinate Zn(2+): histidine 420 and glutamate 439. N-linked (GlcNAc...) asparagine glycosylation is present at asparagine 489. Tyrosine 505 (proton donor) is an active-site residue. Asparagine 584, asparagine 602, asparagine 609, asparagine 655, asparagine 811, asparagine 850, and asparagine 889 each carry an N-linked (GlcNAc...) asparagine glycan.

It belongs to the peptidase M1 family. It depends on Zn(2+) as a cofactor. In terms of tissue distribution, expressed in skin. Expression levels do not differ between dark and light skin areas.

The protein resides in the membrane. Its function is as follows. Metalloprotease which may be important for placentation by regulating biological activity of key peptides at the embryo-maternal interface. Involved in coat pigmentation patterns. During skin development, may be required to establish the periodicity of tabby markings, initiating a pre-pattern at or before hair follicle development. In Acinonyx jubatus (Cheetah), this protein is Aminopeptidase Q (LVRN).